The sequence spans 124 residues: Protein MGF 110-4L (124 aa).

The N-terminal stretch at 1–28 (MLVIFLGILGLLANQVLGLPTQAGGHLR) is a signal peptide. Asn-64 carries an N-linked (GlcNAc...) asparagine; by host glycan. The Prevents secretion from ER motif lies at 121-124 (KEDL).

This sequence belongs to the asfivirus MGF 110 family.

The protein localises to the virion. It is found in the host endoplasmic reticulum-Golgi intermediate compartment. Its function is as follows. Causes the redistribution of lumenal ER protein to an enlarged ERGIC compartment. The polypeptide is Protein MGF 110-4L (Ornithodoros (relapsing fever ticks)).